The sequence spans 485 residues: Ribulose bisphosphate carboxylase large chain (485 aa).

Asparagine 124 and threonine 174 together coordinate substrate. Lysine 176 serves as the catalytic Proton acceptor. Lysine 178 provides a ligand contact to substrate. Mg(2+)-binding residues include lysine 202, aspartate 204, and glutamate 205. An N6-carboxylysine modification is found at lysine 202. Histidine 294 (proton acceptor) is an active-site residue. Arginine 295, histidine 327, and serine 379 together coordinate substrate.

Belongs to the RuBisCO large chain family. Type I subfamily. As to quaternary structure, heterohexadecamer of 8 large chains and 8 small chains. The cofactor is Mg(2+).

The enzyme catalyses 2 (2R)-3-phosphoglycerate + 2 H(+) = D-ribulose 1,5-bisphosphate + CO2 + H2O. It carries out the reaction D-ribulose 1,5-bisphosphate + O2 = 2-phosphoglycolate + (2R)-3-phosphoglycerate + 2 H(+). Functionally, ruBisCO catalyzes two reactions: the carboxylation of D-ribulose 1,5-bisphosphate, the primary event in carbon dioxide fixation, as well as the oxidative fragmentation of the pentose substrate in the photorespiration process. Both reactions occur simultaneously and in competition at the same active site. The polypeptide is Ribulose bisphosphate carboxylase large chain (Rhodopseudomonas palustris (strain BisB18)).